Here is a 262-residue protein sequence, read N- to C-terminus: Aquaporin TIP3-1 (262 aa).

2 helical membrane passes run 27–47 and 61–81; these read AAIS…GSVL and GLVA…AVAV. Residues 89–91 carry the NPA 1 motif; sequence NPA. A run of 3 helical transmembrane segments spans residues 104 to 124, 148 to 168, and 175 to 195; these read LVRA…ATLL, AVLL…ATVI, and VGTI…LAGG. The NPA 2 motif lies at 203–205; sequence NPA. Residues 223–243 traverse the membrane as a helical segment; sequence YWLGPFLGAGLAGLVYEYLVI.

It belongs to the MIP/aquaporin (TC 1.A.8) family. TIP (TC 1.A.8.10) subfamily.

It localises to the vacuole membrane. Functionally, aquaporins facilitate the transport of water and small neutral solutes across cell membranes. The chain is Aquaporin TIP3-1 (TIP3-1) from Zea mays (Maize).